A 947-amino-acid polypeptide reads, in one-letter code: Altered inheritance of mitochondria protein 3 (947 aa).

3 disordered regions span residues 1–332 (MGFW…NALL), 354–810 (MSST…QDEV), and 824–904 (RKTN…KSLE). Residues 36-54 (ASKKHYNNSKARRERKSGK) show a composition bias toward basic residues. Residues serine 57, serine 58, and serine 64 each carry the phosphoserine modification. The span at 59 to 69 (DEEYDSEDEME) shows a compositional bias: acidic residues. A compositionally biased stretch (basic and acidic residues) spans 70-84 (YERKPTDIRSLKDPK). Composition is skewed to low complexity over residues 93 to 105 (PGQK…QQQQ) and 130 to 163 (QSQY…GVVP). Over residues 177–255 (GSNSNATSYQ…YVSHGSTNLG (79 aa)) the composition is skewed to polar residues. 2 stretches are compositionally biased toward low complexity: residues 256-289 (QSQF…QQGQ) and 313-332 (QQQQ…NALL). Residues 354–367 (MSSTTNMQDSNPSY) show a composition bias toward polar residues. The span at 379–395 (GGQPPVPVRMQPQPPQP) shows a compositional bias: pro residues. The segment covering 466-475 (IQPNTTSSAA) has biased composition (polar residues). The residue at position 476 (serine 476) is a Phosphoserine. Composition is skewed to basic and acidic residues over residues 488 to 502 (DNER…DEST) and 526 to 541 (HGLD…KNAP). Over residues 633–644 (VPQSKPQSQSQF) the composition is skewed to polar residues. Positions 667–676 (SQSSNSSDSS) are enriched in low complexity. The residue at position 729 (threonine 729) is a Phosphothreonine. Positions 749–759 (DSSKDANKYEK) are enriched in basic and acidic residues. The segment covering 763–774 (PVTSSIQAQQST) has biased composition (polar residues). Threonine 861 is subject to Phosphothreonine. The segment covering 862–879 (PPRPPPSRSSPKKVPPVV) has biased composition (pro residues). Positions 888 to 899 (KKPPVVPKKKPL) are enriched in basic residues.

It belongs to the AIM3 family. As to quaternary structure, interacts with RVS167.

The protein localises to the membrane raft. The chain is Altered inheritance of mitochondria protein 3 (AIM3) from Saccharomyces cerevisiae (strain JAY291) (Baker's yeast).